We begin with the raw amino-acid sequence, 524 residues long: Butyrophilin subfamily 1 member A1 (524 aa).

Residues 1 to 26 form the signal peptide; sequence MAVPTNSCLLVCLLTLTVLQLPTLDS. The Extracellular portion of the chain corresponds to 27 to 247; it reads AAPFDVTAPQ…APFVPRLTPW (221 aa). 2 Ig-like V-type domains span residues 29–141 and 149–235; these read PFDV…VYLK and PQIS…VEIS. Disulfide bonds link Cys51/Cys125 and Cys165/Cys219. 2 N-linked (GlcNAc...) asparagine glycosylation sites follow: Asn56 and Asn216. A helical membrane pass occupies residues 248–268; the sequence is IVAVAIILLALGFLTIGSIFF. Over 269–524 the chain is Cytoplasmic; that stretch reads TWKLYKERSS…IPFSPSQAAP (256 aa). The B30.2/SPRY domain maps to 286–480; sequence SKERLLEELR…LTICSTANGP (195 aa).

It belongs to the immunoglobulin superfamily. BTN/MOG family. Seems to associate with xanthine dehydrogenase/oxidase. In terms of processing, N-glycosylated. As to expression, strongly expressed in lactating mammary tissue (at protein level). About 100-fold lower levels in virgin mammary tissue. Also detected in spleen and thymus at 10-20 times lower levels compared to those detected in virgin mammary gland. Very low levels in several other tissues, including brain, heart, kidney, lymph node, lung and small intestine. In the thymus, detected in the stroma, in epithelial cells (at protein level). Most prominent in medullary areas of the thymus and at the corticomedullary junction (at protein level).

It is found in the membrane. In terms of biological role, may function in the secretion of milk-fat droplets. May act as a specific membrane-associated receptor for the association of cytoplasmic droplets with the apical plasma membrane. Inhibits the proliferation of CD4 and CD8 T-cells activated by anti-CD3 antibodies, T-cell metabolism and IL2 and IFNG secretion. This Mus musculus (Mouse) protein is Butyrophilin subfamily 1 member A1 (Btn1a1).